A 79-amino-acid chain; its full sequence is uncharacterized protein (79 aa).

Residues 15-37 (KSIVSVLALTSLGCGVFVISATA) traverse the membrane as a helical segment.

The protein localises to the membrane. This is an uncharacterized protein from Dictyostelium discoideum (Social amoeba).